The primary structure comprises 263 residues: Pimeloyl-[acyl-carrier protein] methyl ester esterase (263 aa).

Substrate contacts are provided by residues tryptophan 28, 86–87 (SL), and 149–153 (FLAIQ). Serine 86 (nucleophile) is an active-site residue. Residues aspartate 213 and histidine 240 contribute to the active site. Histidine 240 provides a ligand contact to substrate.

It belongs to the AB hydrolase superfamily. Carboxylesterase BioH family. In terms of assembly, monomer.

It is found in the cytoplasm. It carries out the reaction 6-carboxyhexanoyl-[ACP] methyl ester + H2O = 6-carboxyhexanoyl-[ACP] + methanol + H(+). It participates in cofactor biosynthesis; biotin biosynthesis. In terms of biological role, the physiological role of BioH is to remove the methyl group introduced by BioC when the pimeloyl moiety is complete. It allows to synthesize pimeloyl-ACP via the fatty acid synthetic pathway through the hydrolysis of the ester bonds of pimeloyl-ACP esters. The sequence is that of Pimeloyl-[acyl-carrier protein] methyl ester esterase from Shewanella oneidensis (strain ATCC 700550 / JCM 31522 / CIP 106686 / LMG 19005 / NCIMB 14063 / MR-1).